Here is a 443-residue protein sequence, read N- to C-terminus: 3-phosphoshikimate 1-carboxyvinyltransferase (443 aa).

Residues 1–25 (MSHSAEPLPMTARRSGPLTGEAQVP) are disordered. K28, S29, and R33 together coordinate 3-phosphoshikimate. A phosphoenolpyruvate-binding site is contributed by K28. Positions 101 and 129 each coordinate phosphoenolpyruvate. 3-phosphoshikimate contacts are provided by S174, Q176, D326, and K353. Q176 contacts phosphoenolpyruvate. The active-site Proton acceptor is D326. Residues R357 and R400 each coordinate phosphoenolpyruvate.

It belongs to the EPSP synthase family. Monomer.

Its subcellular location is the cytoplasm. The catalysed reaction is 3-phosphoshikimate + phosphoenolpyruvate = 5-O-(1-carboxyvinyl)-3-phosphoshikimate + phosphate. The protein operates within metabolic intermediate biosynthesis; chorismate biosynthesis; chorismate from D-erythrose 4-phosphate and phosphoenolpyruvate: step 6/7. Functionally, catalyzes the transfer of the enolpyruvyl moiety of phosphoenolpyruvate (PEP) to the 5-hydroxyl of shikimate-3-phosphate (S3P) to produce enolpyruvyl shikimate-3-phosphate and inorganic phosphate. The protein is 3-phosphoshikimate 1-carboxyvinyltransferase of Paracoccus denitrificans (strain Pd 1222).